Reading from the N-terminus, the 119-residue chain is Large ribosomal subunit protein eL31z (119 aa).

This sequence belongs to the eukaryotic ribosomal protein eL31 family.

The protein is Large ribosomal subunit protein eL31z (RPL31A) of Arabidopsis thaliana (Mouse-ear cress).